The sequence spans 657 residues: UvrABC system protein B (657 aa).

In terms of domain architecture, Helicase ATP-binding spans 25 to 182 (KSIKKGNEFQ…KKLIEIQYER (158 aa)). 38–45 (GVTGSGKT) lines the ATP pocket. A Beta-hairpin motif is present at residues 91 to 114 (YYDYYQPEAYVPQTDTFIEKDASI). The Helicase C-terminal domain occupies 429–595 (QIDDLYTEIQ…TINKEVRDLI (167 aa)). The 36-residue stretch at 621 to 656 (KKLIKEYTEEMMLAAKNLQFERAAQLRDEIEELKGK) folds into the UVR domain.

The protein belongs to the UvrB family. As to quaternary structure, forms a heterotetramer with UvrA during the search for lesions. Interacts with UvrC in an incision complex.

The protein localises to the cytoplasm. In terms of biological role, the UvrABC repair system catalyzes the recognition and processing of DNA lesions. A damage recognition complex composed of 2 UvrA and 2 UvrB subunits scans DNA for abnormalities. Upon binding of the UvrA(2)B(2) complex to a putative damaged site, the DNA wraps around one UvrB monomer. DNA wrap is dependent on ATP binding by UvrB and probably causes local melting of the DNA helix, facilitating insertion of UvrB beta-hairpin between the DNA strands. Then UvrB probes one DNA strand for the presence of a lesion. If a lesion is found the UvrA subunits dissociate and the UvrB-DNA preincision complex is formed. This complex is subsequently bound by UvrC and the second UvrB is released. If no lesion is found, the DNA wraps around the other UvrB subunit that will check the other stand for damage. The sequence is that of UvrABC system protein B from Clostridium botulinum (strain Alaska E43 / Type E3).